We begin with the raw amino-acid sequence, 926 residues long: Tyrosine-protein phosphatase non-receptor type 4 (926 aa).

The region spanning 29–312 (VVCNILLLDN…EHHTFFRLDR (284 aa)) is the FERM domain. Disordered regions lie at residues 379–412 (SDDR…TRVR), 429–474 (SEDF…KKNS), and 492–511 (NESF…GGIP). Composition is skewed to polar residues over residues 398-408 (NHRNSSFTQEA) and 432-455 (FVSQ…PSQE). S474 is modified (phosphoserine). Residues 517 to 589 (LIKMKPDENG…DQVVLFIKAS (73 aa)) enclose the PDZ domain. In terms of domain architecture, Tyrosine-protein phosphatase spans 655–911 (VLAQFDQLYR…RFVCEAILKV (257 aa)). Substrate is bound by residues D820, 852-858 (CSAGIGR), and Q896. Residue C852 is the Phosphocysteine intermediate of the active site.

The protein belongs to the protein-tyrosine phosphatase family. Non-receptor class subfamily. Highly expressed in testis. Specifically expressed in spermatocytes and spermatids within seminiferous tubules (at protein level).

Its subcellular location is the cell membrane. The protein resides in the cytoplasm. It localises to the cytoskeleton. It catalyses the reaction O-phospho-L-tyrosyl-[protein] + H2O = L-tyrosyl-[protein] + phosphate. Functionally, phosphatase that plays a role in immunity, learning, synaptic plasticity or cell homeostasis. Regulates neuronal cell homeostasis by protecting neurons against apoptosis. Negatively regulates TLR4-induced interferon beta production by dephosphorylating adapter TICAM2 and inhibiting subsequent TRAM-TRIF interaction. Dephosphorylates also the immunoreceptor tyrosine-based activation motifs/ITAMs of the TCR zeta subunit and thereby negatively regulates TCR-mediated signaling pathway. May act at junctions between the membrane and the cytoskeleton. The sequence is that of Tyrosine-protein phosphatase non-receptor type 4 (Ptpn4) from Mus musculus (Mouse).